The chain runs to 531 residues: Cytochrome P450 monooxygenase acuC (531 aa).

The helical transmembrane segment at 3–23 threads the bilayer; sequence PIVWLLGGAIALLVVVIRAAW. Cysteine 447 contributes to the heme binding site.

Belongs to the cytochrome P450 family. It depends on heme as a cofactor.

The protein resides in the endoplasmic reticulum membrane. It catalyses the reaction 3-methylphenol + reduced [NADPH--hemoprotein reductase] + O2 = 3-hydroxybenzyl alcohol + oxidized [NADPH--hemoprotein reductase] + H2O + H(+). Its pathway is secondary metabolite biosynthesis. Its function is as follows. Cytochrome P450 monooxygenase; part of the gene cluster that mediates the biosynthesis of aculins. The pathway begins with the synthesis of 6-methylsalicylic acid by the polyketide synthase (PKS) acuA via condensation of acetate and malonate units. The 6-methylsalicylic acid decarboxylase acuB then catalyzes the decarboxylation of 6-methylsalicylic acid to yield m-cresol (also known as 3-methylphenol). These first reactions occur in the cytosol. The intermediate m-cresol is then transported into the endoplasmic reticulum where the cytochrome P450 monooxygenase acuC converts it to m-hydroxybenzyl alcohol, which is further converted to gentisyl alcohol by the cytochrome P450 monooxygenase acuD. Gentisyl alcohol is further oxidized by the oxidoreductase acuE that probably catalyzes hydroxylation of the aromatic ring. The aromatic system might then be opened by oxidation through a Baeyer-Villiger type of oxidation, which could be catalyzed by acuF, with the carboxylic acid at C-1 subsequently reduced to an aldehyde by acuG. Subsequently, a hemiacetal is formed, before the dehydrogenase acuH would reduce the double bond between C-4 and C-6. Finally, keto-enol tautomerism results in formation of aculinic acid, which exists as two diastereomers (both R/S configurations at C-1) by non-enzymatic hemiacetal formation. The carboxypeptidase acuI could be involved in the linking of aculinic acid to an aculene A moiety produced by the aculene biosynthesis cluster and which leads to the production of aculin A. AcuI may also be involved in the attachment of proline to aculinic acid to form epi-aculins A and B. The protein is Cytochrome P450 monooxygenase acuC of Aspergillus aculeatus (strain ATCC 16872 / CBS 172.66 / WB 5094).